The following is a 315-amino-acid chain: tRNA-dihydrouridine(16) synthase (315 aa).

Residues 7 to 9 (PME) and Q68 each bind FMN. C98 acts as the Proton donor in catalysis. FMN is bound by residues K139, 200–202 (NGE), and 224–225 (GR).

Belongs to the Dus family. DusC subfamily. It depends on FMN as a cofactor.

The enzyme catalyses 5,6-dihydrouridine(16) in tRNA + NADP(+) = uridine(16) in tRNA + NADPH + H(+). The catalysed reaction is 5,6-dihydrouridine(16) in tRNA + NAD(+) = uridine(16) in tRNA + NADH + H(+). Functionally, catalyzes the synthesis of 5,6-dihydrouridine (D), a modified base found in the D-loop of most tRNAs, via the reduction of the C5-C6 double bond in target uridines. Specifically modifies U16 in tRNAs. The protein is tRNA-dihydrouridine(16) synthase of Shigella flexneri.